A 322-amino-acid polypeptide reads, in one-letter code: Putative UDP-N-acetylglucosamine--dolichyl-phosphate N-acetylglucosaminephosphotransferase (322 aa).

The next 9 helical transmembrane spans lie at 5 to 25 (AILL…VWVI), 46 to 66 (IPLL…FSLL), 76 to 96 (IPAV…DDIF), 102 to 122 (VRAF…VGHS), 123 to 143 (IISI…IIII), 160 to 180 (LNGL…YIGL), 186 to 206 (TYQA…FLIF), 222 to 242 (FIGA…ALAI), and 295 to 315 (YQVV…AVIL).

It belongs to the glycosyltransferase 4 family.

The protein resides in the cell membrane. It carries out the reaction a di-trans,poly-cis-dolichyl phosphate + UDP-N-acetyl-alpha-D-glucosamine = an N-acetyl-alpha-D-glucosaminyl-diphospho-di-trans,poly-cis-dolichol + UMP. Inhibited by tunicamycin. The sequence is that of Putative UDP-N-acetylglucosamine--dolichyl-phosphate N-acetylglucosaminephosphotransferase (gnpTA) from Saccharolobus solfataricus (strain ATCC 35092 / DSM 1617 / JCM 11322 / P2) (Sulfolobus solfataricus).